Consider the following 267-residue polypeptide: tRNA-cytidine(32) 2-sulfurtransferase 2 (267 aa).

Positions 42–47 (SGGKDS) match the PP-loop motif motif. [4Fe-4S] cluster-binding residues include Cys117, Cys120, and Cys208.

This sequence belongs to the TtcA family. In terms of assembly, homodimer. It depends on Mg(2+) as a cofactor. The cofactor is [4Fe-4S] cluster.

Its subcellular location is the cytoplasm. It catalyses the reaction cytidine(32) in tRNA + S-sulfanyl-L-cysteinyl-[cysteine desulfurase] + AH2 + ATP = 2-thiocytidine(32) in tRNA + L-cysteinyl-[cysteine desulfurase] + A + AMP + diphosphate + H(+). Its pathway is tRNA modification. Functionally, catalyzes the ATP-dependent 2-thiolation of cytidine in position 32 of tRNA, to form 2-thiocytidine (s(2)C32). The sulfur atoms are provided by the cysteine/cysteine desulfurase (IscS) system. This Francisella tularensis subsp. holarctica (strain FTNF002-00 / FTA) protein is tRNA-cytidine(32) 2-sulfurtransferase 2.